Here is a 691-residue protein sequence, read N- to C-terminus: Mediator of RNA polymerase II transcription subunit 17 (691 aa).

A coiled-coil region spans residues 158–185; sequence KLESFDAAANKLLQSAQRLEEDIAAETK.

Belongs to the Mediator complex subunit 17 family. As to quaternary structure, component of the Mediator complex.

It is found in the nucleus. Its function is as follows. Component of the Mediator complex, a coactivator involved in the regulated transcription of nearly all RNA polymerase II-dependent genes. Mediator functions as a bridge to convey information from gene-specific regulatory proteins to the basal RNA polymerase II transcription machinery. Mediator is recruited to promoters by direct interactions with regulatory proteins and serves as a scaffold for the assembly of a functional preinitiation complex with RNA polymerase II and the general transcription factors. This Coccidioides immitis (strain RS) (Valley fever fungus) protein is Mediator of RNA polymerase II transcription subunit 17 (SRB4).